Here is a 293-residue protein sequence, read N- to C-terminus: Inner membrane ABC transporter permease protein YcjO (293 aa).

The Periplasmic segment spans residues 1–12; sequence MNRLFSGRSDMP. The chain crosses the membrane as a helical span at residues 13-33; sequence FALLLLAPSLLLLGGLVAWPM. The Cytoplasmic segment spans residues 34-77; the sequence is VSNIEISFLRLPLNPNIESTFVGVSNYVRILSDPGFWHSLWMTV. An ABC transmembrane type-1 domain is found at 73–283; the sequence is LWMTVWYTAL…IIIFAVILLT (211 aa). A helical membrane pass occupies residues 78-98; that stretch reads WYTALVVAGSTVLGLAVAMFF. Topologically, residues 99 to 110 are periplasmic; the sequence is NREFRLRKTARS. The chain crosses the membrane as a helical span at residues 111–131; it reads LVILSYVTPSISLVFAWKYMF. At 132 to 135 the chain is on the cytoplasmic side; that stretch reads NNGY. The chain crosses the membrane as a helical span at residues 136-156; sequence GIVNYLGVDLLHLYEQAPLWF. The Periplasmic segment spans residues 157–162; the sequence is DNPGSS. Residues 163–183 traverse the membrane as a helical segment; it reads FVLVVLFAIWRYFPYAFISFL. The Cytoplasmic portion of the chain corresponds to 184–214; that stretch reads AILQTIDKSLYEAAEMDGANAWQRFRIVTLP. Residues 215–235 form a helical membrane-spanning segment; it reads AIMPVLATVVTLRTIWMFYMF. The Periplasmic portion of the chain corresponds to 236 to 261; sequence ADVYLLTTKVDILGVYLYKTAFAFND. The helical transmembrane segment at 262–282 threads the bilayer; sequence LGKAAAISVVLFIIIFAVILL. Residues 283–293 lie on the Cytoplasmic side of the membrane; the sequence is TRKRVNLNGNK.

This sequence belongs to the binding-protein-dependent transport system permease family. MalFG subfamily.

The protein resides in the cell inner membrane. Functionally, probably part of the binding-protein-dependent transport system YcjNOP. Probably responsible for the translocation of the substrate across the membrane. The protein is Inner membrane ABC transporter permease protein YcjO (ycjO) of Escherichia coli (strain K12).